The sequence spans 423 residues: D-tagatose-1,6-bisphosphate aldolase subunit GatZ (423 aa).

It belongs to the GatZ/KbaZ family. GatZ subfamily. In terms of assembly, forms a complex with GatY.

Its pathway is carbohydrate metabolism; D-tagatose 6-phosphate degradation; D-glyceraldehyde 3-phosphate and glycerone phosphate from D-tagatose 6-phosphate: step 2/2. Component of the tagatose-1,6-bisphosphate aldolase GatYZ that is required for full activity and stability of the Y subunit. Could have a chaperone-like function for the proper and stable folding of GatY. When expressed alone, GatZ does not show any aldolase activity. Is involved in the catabolism of galactitol. In Salmonella heidelberg (strain SL476), this protein is D-tagatose-1,6-bisphosphate aldolase subunit GatZ.